The primary structure comprises 189 residues: GTPase NRas (189 aa).

Residues Gly-10 to Ala-18 and Val-29 to Asp-30 each bind GTP. The Effector region motif lies at Tyr-32 to Tyr-40. Asp-57–Gln-61 serves as a coordination point for GTP. Ser-89 is modified (phosphoserine). Asn-116–Asp-119 lines the GTP pocket. The tract at residues Tyr-166–Pro-185 is hypervariable region. Lys-170 is covalently cross-linked (Glycyl lysine isopeptide (Lys-Gly) (interchain with G-Cter in ubiquitin)). Cys-181 carries S-palmitoyl cysteine lipidation. Cys-186 carries S-farnesyl cysteine lipidation. Positions Val-187 to Met-189 are cleaved as a propeptide — removed in mature form.

It belongs to the small GTPase superfamily. Ras family. In terms of assembly, interacts (active GTP-bound form preferentially) with RGS14. Interacts (active GTP-bound form) with RASSF7. Interacts (active GTP-bound form) with both SHOC2 and PP1c (all isoforms) to form a tertiary complex; SHOC2 and PP1c preferably bind M-Ras/MRAS, but they also bind K-Ras/KRAS, N-Ras/NRAS and H-Ras/HRAS. In terms of processing, palmitoylated by the ZDHHC9-GOLGA7 complex. Depalmitoylated by ABHD17A, ABHD17B and ABHD17C. A continuous cycle of de- and re-palmitoylation regulates rapid exchange between plasma membrane and Golgi. Post-translationally, acetylation at Lys-104 prevents interaction with guanine nucleotide exchange factors (GEFs). Ubiquitinated by the BCR(LZTR1) E3 ubiquitin ligase complex at Lys-170 in a non-degradative manner, leading to inhibit Ras signaling by decreasing Ras association with membranes. In terms of processing, phosphorylation at Ser-89 enhances NRAS association with its downstream effectors.

It localises to the cell membrane. Its subcellular location is the golgi apparatus membrane. The enzyme catalyses GTP + H2O = GDP + phosphate + H(+). With respect to regulation, alternates between an inactive form bound to GDP and an active form bound to GTP. Activated by a guanine nucleotide-exchange factor (GEF) and inactivated by a GTPase-activating protein (GAP). In terms of biological role, ras proteins bind GDP/GTP and possess intrinsic GTPase activity. The polypeptide is GTPase NRas (NRAS) (Pongo abelii (Sumatran orangutan)).